A 97-amino-acid chain; its full sequence is Coiled-coil domain-containing protein 167 (97 aa).

The stretch at 10 to 79 (GVALEIDGLE…LRQENRKNML (70 aa)) forms a coiled coil. Residues 77–97 (NMLLSVAIFLLLTVIYAYWAL) form a helical membrane-spanning segment.

The protein localises to the membrane. The protein is Coiled-coil domain-containing protein 167 (CCDC167) of Bos taurus (Bovine).